Consider the following 233-residue polypeptide: Lipoprotein-releasing system ATP-binding protein LolD (233 aa).

An ABC transporter domain is found at 6-233; that stretch reads LQCDNLCKRY…TAELSLMGAE (228 aa). 42 to 49 serves as a coordination point for ATP; the sequence is GSSGSGKS.

This sequence belongs to the ABC transporter superfamily. Lipoprotein translocase (TC 3.A.1.125) family. As to quaternary structure, the complex is composed of two ATP-binding proteins (LolD) and two transmembrane proteins (LolC and LolE).

The protein localises to the cell inner membrane. In terms of biological role, part of the ABC transporter complex LolCDE involved in the translocation of mature outer membrane-directed lipoproteins, from the inner membrane to the periplasmic chaperone, LolA. Responsible for the formation of the LolA-lipoprotein complex in an ATP-dependent manner. The chain is Lipoprotein-releasing system ATP-binding protein LolD from Shigella flexneri.